We begin with the raw amino-acid sequence, 431 residues long: Glutamate-1-semialdehyde 2,1-aminomutase (431 aa).

The residue at position 269 (Lys269) is an N6-(pyridoxal phosphate)lysine.

Belongs to the class-III pyridoxal-phosphate-dependent aminotransferase family. HemL subfamily. Homodimer. Pyridoxal 5'-phosphate serves as cofactor.

The protein resides in the cytoplasm. The enzyme catalyses (S)-4-amino-5-oxopentanoate = 5-aminolevulinate. Its pathway is porphyrin-containing compound metabolism; protoporphyrin-IX biosynthesis; 5-aminolevulinate from L-glutamyl-tRNA(Glu): step 2/2. In Francisella tularensis subsp. tularensis (strain SCHU S4 / Schu 4), this protein is Glutamate-1-semialdehyde 2,1-aminomutase.